Reading from the N-terminus, the 224-residue chain is Endonuclease NucS (224 aa).

It belongs to the NucS endonuclease family.

The protein resides in the cytoplasm. Functionally, cleaves both 3' and 5' ssDNA extremities of branched DNA structures. The protein is Endonuclease NucS of Rhodococcus erythropolis (strain PR4 / NBRC 100887).